The following is a 640-amino-acid chain: 2-hydroxyacyl-CoA lyase 2 (640 aa).

Residues 2–22 form a helical membrane-spanning segment; the sequence is VLFLIIAAIIIGLLLWKWLDV. E102 is a thiamine diphosphate binding site. Residues 477–557 form a thiamine pyrophosphate binding region; the sequence is DFVGSAAYIV…VIGIVGNDAC (81 aa). Mg(2+) is bound by residues D528 and N554.

The protein belongs to the TPP enzyme family. Mg(2+) is required as a cofactor. Requires thiamine diphosphate as cofactor.

The protein resides in the endoplasmic reticulum membrane. It carries out the reaction 2-hydroxyoctadecanoyl-CoA = heptadecanal + formyl-CoA. The catalysed reaction is (2R)-hydroxyhexadecanoyl-CoA = pentadecanal + formyl-CoA. Functionally, endoplasmic reticulum 2-OH acyl-CoA lyase involved in the cleavage (C1 removal) reaction in the fatty acid alpha-oxydation in a thiamine pyrophosphate (TPP)-dependent manner. The protein is 2-hydroxyacyl-CoA lyase 2 of Caenorhabditis elegans.